The primary structure comprises 356 residues: GDSL esterase/lipase At2g36325 (356 aa).

A signal peptide spans 1–26 (MNITKLTPWFLFSCLILLSDYIKVNS). A glycan (N-linked (GlcNAc...) asparagine) is linked at Asn25. The active-site Nucleophile is the Ser54. N-linked (GlcNAc...) asparagine glycans are attached at residues Asn165, Asn185, and Asn240. Residues Asp334 and His337 contribute to the active site.

Belongs to the 'GDSL' lipolytic enzyme family.

Its subcellular location is the secreted. This Arabidopsis thaliana (Mouse-ear cress) protein is GDSL esterase/lipase At2g36325.